Here is a 950-residue protein sequence, read N- to C-terminus: Oxysterol-binding protein-related protein 1 (950 aa).

The interval 1–237 (MNTEAEQQLL…NKVVHKALKR (237 aa)) is interaction with RAB7A. ANK repeat units lie at residues 47–76 (LGWT…KVNM), 80–109 (MGDT…DTTV), and 175–204 (LGNT…DPSL). In terms of domain architecture, PH spans 235 to 334 (LKRFEGPLWK…WLEAIEEHSA (100 aa)). The stretch at 430 to 463 (NFKLEQEQEKNKILSEALETLATEHHELERSLVE) forms a coiled coil. Positions 469–483 (SILSEDEFYDALSGS) match the FFAT motif. 2 disordered regions span residues 795–821 (KKNT…VPDS) and 881–913 (MENG…SEED). Positions 877–913 (DIRAMENGEIDQASEEKKRLEEKQRAARKNRSKSEED) form a coiled coil. Over residues 890–901 (SEEKKRLEEKQR) the composition is skewed to basic and acidic residues.

It belongs to the OSBP family. As to quaternary structure, interacts (via FFAT motif) with VAPA. Interacts (via FFAT motif) with VAPB. Interacts with the GTP-bound form of RAB7A. Interacts with OAS1B. Interacts (via FFAT motif) with MOSPD2 (via MSP domain). Detected in prostate and liver.

The protein resides in the late endosome. Binds phospholipids; exhibits strong binding to phosphatidic acid and weak binding to phosphatidylinositol 3-phosphate. Stabilizes GTP-bound RAB7A on late endosomes/lysosomes and alters functional properties of late endocytic compartments via its interaction with RAB7A. Binds 25-hydroxycholesterol and cholesterol. This chain is Oxysterol-binding protein-related protein 1, found in Rattus norvegicus (Rat).